We begin with the raw amino-acid sequence, 256 residues long: Expansin-like B1 (256 aa).

The signal sequence occupies residues 1–24 (MAQLLRRHLPVILSLILFLSKATA). N-linked (GlcNAc...) asparagine glycosylation occurs at N27. The Expansin-like EG45 domain occupies 46–150 (NGACEYGAFG…RRVSCTYPNK (105 aa)). The Expansin-like CBD domain occupies 164–249 (NYLEFEIWYQ…NWTAGATYDS (86 aa)). 2 N-linked (GlcNAc...) asparagine glycosylation sites follow: N189 and N240.

This sequence belongs to the expansin family. Expansin-like B subfamily.

It is found in the secreted. This is Expansin-like B1 (EXLB1) from Oryza sativa subsp. japonica (Rice).